A 469-amino-acid chain; its full sequence is GDP-fucose protein O-fucosyltransferase 3 (469 aa).

Residues 1–9 are Cytoplasmic-facing; the sequence is MVNRIWEKR. Residues 10–30 form a helical; Signal-anchor for type II membrane protein membrane-spanning segment; that stretch reads FWISCFFIIFLFILVIFQVMV. The Lumenal portion of the chain corresponds to 31 to 469; it reads ELGRFEKKET…EFWNLVFKFW (439 aa). Residues Asn100, Asn158, Asn308, and Asn333 are each glycosylated (N-linked (GlcNAc...) asparagine). Cysteines 379 and 382 form a disulfide. N-linked (GlcNAc...) asparagine glycosylation occurs at Asn455.

This sequence belongs to the glycosyltransferase 10 family.

The protein resides in the endoplasmic reticulum membrane. The enzyme catalyses L-threonyl-[protein] + GDP-beta-L-fucose = 3-O-(alpha-L-fucosyl)-L-threonyl-[protein] + GDP + H(+). It catalyses the reaction L-seryl-[protein] + GDP-beta-L-fucose = 3-O-(alpha-L-fucosyl)-L-seryl-[protein] + GDP + H(+). It participates in protein modification; protein glycosylation. In terms of biological role, protein O-fucosyltransferase that specifically catalyzes O-fucosylation of serine or threonine residues in EMI domains of target proteins. Attaches fucose through an O-glycosidic linkage. O-fucosylation of EMI domain-containing proteins may be required for facilitating protein folding and secretion. This is GDP-fucose protein O-fucosyltransferase 3 (fut10) from Xenopus laevis (African clawed frog).